The following is a 55-amino-acid chain: Spermatid nuclear transition protein 1 (55 aa).

Residues 1 to 42 (MSTSRKLKSQGTRRGKNRTPHKGVKRGCSKRKYRKSSLKSRK) are compositionally biased toward basic residues. Positions 1-55 (MSTSRKLKSQGTRRGKNRTPHKGVKRGCSKRKYRKSSLKSRKRCDDANRNFRSHL) are disordered. 4 positions are modified to phosphoserine: serine 9, serine 36, serine 37, and serine 40.

The protein belongs to the nuclear transition protein 1 family. In terms of tissue distribution, testis.

The protein resides in the nucleus. It is found in the chromosome. In terms of biological role, plays a key role in the replacement of histones to protamine in the elongating spermatids of mammals. In condensing spermatids, loaded onto the nucleosomes, where it promotes the recruitment and processing of protamines, which are responsible for histone eviction. The protein is Spermatid nuclear transition protein 1 (TNP1) of Ovis aries (Sheep).